Here is a 100-residue protein sequence, read N- to C-terminus: Small ribosomal subunit protein uS14c (100 aa).

Belongs to the universal ribosomal protein uS14 family. In terms of assembly, part of the 30S ribosomal subunit.

The protein localises to the plastid. The protein resides in the chloroplast. Functionally, binds 16S rRNA, required for the assembly of 30S particles. This is Small ribosomal subunit protein uS14c from Eucalyptus globulus subsp. globulus (Tasmanian blue gum).